The sequence spans 400 residues: Nicotinate phosphoribosyltransferase (400 aa).

His-220 is modified (phosphohistidine; by autocatalysis).

The protein belongs to the NAPRTase family. In terms of processing, transiently phosphorylated on a His residue during the reaction cycle. Phosphorylation strongly increases the affinity for substrates and increases the rate of nicotinate D-ribonucleotide production. Dephosphorylation regenerates the low-affinity form of the enzyme, leading to product release.

It carries out the reaction nicotinate + 5-phospho-alpha-D-ribose 1-diphosphate + ATP + H2O = nicotinate beta-D-ribonucleotide + ADP + phosphate + diphosphate. Its pathway is cofactor biosynthesis; NAD(+) biosynthesis; nicotinate D-ribonucleotide from nicotinate: step 1/1. In terms of biological role, catalyzes the synthesis of beta-nicotinate D-ribonucleotide from nicotinate and 5-phospho-D-ribose 1-phosphate at the expense of ATP. This Escherichia coli O45:K1 (strain S88 / ExPEC) protein is Nicotinate phosphoribosyltransferase.